The chain runs to 428 residues: Serine--tRNA ligase (428 aa).

Position 235–237 (Thr-235–Glu-237) interacts with L-serine. Position 266-268 (Arg-266–Glu-268) interacts with ATP. Residue Glu-289 participates in L-serine binding. ATP is bound at residue Glu-353–Ser-356. Position 389 (Ser-389) interacts with L-serine.

Belongs to the class-II aminoacyl-tRNA synthetase family. Type-1 seryl-tRNA synthetase subfamily. In terms of assembly, homodimer. The tRNA molecule binds across the dimer.

It localises to the cytoplasm. It catalyses the reaction tRNA(Ser) + L-serine + ATP = L-seryl-tRNA(Ser) + AMP + diphosphate + H(+). It carries out the reaction tRNA(Sec) + L-serine + ATP = L-seryl-tRNA(Sec) + AMP + diphosphate + H(+). Its pathway is aminoacyl-tRNA biosynthesis; selenocysteinyl-tRNA(Sec) biosynthesis; L-seryl-tRNA(Sec) from L-serine and tRNA(Sec): step 1/1. Functionally, catalyzes the attachment of serine to tRNA(Ser). Is also able to aminoacylate tRNA(Sec) with serine, to form the misacylated tRNA L-seryl-tRNA(Sec), which will be further converted into selenocysteinyl-tRNA(Sec). The chain is Serine--tRNA ligase from Pasteurella multocida (strain Pm70).